The sequence spans 66 residues: Large ribosomal subunit protein bL35 (66 aa).

Positions 20 to 41 (GKVMSAQRGKRHGMIKRTKKQI) are disordered. Residues 27-41 (RGKRHGMIKRTKKQI) are compositionally biased toward basic residues.

It belongs to the bacterial ribosomal protein bL35 family.

The protein is Large ribosomal subunit protein bL35 of Rhodopseudomonas palustris (strain BisB5).